We begin with the raw amino-acid sequence, 136 residues long: MLRTILGSKIHRATVTQADLDYVGSVTIDADLVHAAGLIEGEKVAIVDITNGARLETYVIVGDAGTGNICINGAAAHLINPGDLVIIMSYLQATDAEAKAYEPKIVHVDADNRIVALGNDLAEALPGSGLLTSRSI.

S25 acts as the Schiff-base intermediate with substrate; via pyruvic acid in catalysis. S25 is subject to Pyruvic acid (Ser). T57 provides a ligand contact to substrate. The Proton donor role is filled by Y58. Residue G73–A75 participates in substrate binding.

Belongs to the PanD family. As to quaternary structure, heterooctamer of four alpha and four beta subunits. Pyruvate serves as cofactor. In terms of processing, is synthesized initially as an inactive proenzyme, which is activated by self-cleavage at a specific serine bond to produce a beta-subunit with a hydroxyl group at its C-terminus and an alpha-subunit with a pyruvoyl group at its N-terminus.

It localises to the cytoplasm. It carries out the reaction L-aspartate + H(+) = beta-alanine + CO2. Its pathway is cofactor biosynthesis; (R)-pantothenate biosynthesis; beta-alanine from L-aspartate: step 1/1. Catalyzes the pyruvoyl-dependent decarboxylation of aspartate to produce beta-alanine. The sequence is that of Aspartate 1-decarboxylase from Corynebacterium glutamicum (strain R).